The sequence spans 362 residues: Alternative oxidase, mitochondrial (362 aa).

Residues 1 to 64 constitute a mitochondrion transit peptide; sequence MNTPKVNILY…RGFTTTSVVR (64 aa). A helical transmembrane segment spans residues 156–176; it reads LVRFIFLESIAGVPGMVAGML. Fe cation contacts are provided by Glu-163, Glu-202, and His-205. Residues 222–242 traverse the membrane as a helical segment; that stretch reads LILGAQGVFFNAMFLSYLVSP. Glu-253, Glu-310, and His-313 together coordinate Fe cation.

The protein belongs to the alternative oxidase family. It depends on Fe cation as a cofactor.

It is found in the mitochondrion inner membrane. Functionally, catalyzes cyanide-resistant oxygen consumption. May increase respiration when the cytochrome respiratory pathway is restricted, or in response to low temperatures. The chain is Alternative oxidase, mitochondrial (aod-1) from Gelasinospora sp. (strain S23).